The sequence spans 234 residues: CKLF-like MARVEL transmembrane domain-containing protein 4 (234 aa).

Over residues 1–11 (MRSGEELDGFE) the composition is skewed to acidic residues. Residues 1–38 (MRSGEELDGFEGEASSTSMISGASSPYQPTTEPVSQRR) are disordered. The segment covering 15–25 (SSTSMISGASS) has biased composition (low complexity). Residues 49-176 (YLRGALGRLK…NTFLAVQKWR (128 aa)) form the MARVEL domain. Helical transmembrane passes span 59-79 (VAQVILALIAFICIETIMACS), 85-105 (YFFEFVSCSAFVVTGVLLIMF), 123-143 (LVNTGLSAFLFFIASIVLAAL), and 151-171 (IAAVIFGFLATAAYAVNTFLA). Ser194 carries the phosphoserine modification.

This sequence belongs to the chemokine-like factor family. As to quaternary structure, interacts with PD-L1/CD274 and CMTM6. Highly expressed in testis and prostate.

Its subcellular location is the membrane. In terms of biological role, acts as a backup for CMTM6 to regulate plasma membrane expression of PD-L1/CD274, an immune inhibitory ligand critical for immune tolerance to self and antitumor immunity. May protect PD-L1/CD274 from being polyubiquitinated and targeted for degradation. This is CKLF-like MARVEL transmembrane domain-containing protein 4 from Homo sapiens (Human).